A 1452-amino-acid polypeptide reads, in one-letter code: MIVLVTCLLLLCSYHTVLSTTNNECIQVNVTQLAGNENLIRDFLFSNFKEEGSVVVGGYYPTEVWYNCSRTARTTAFQYFNNIHAFYFVMEAMENSTGNARGKPLLFHVHGEPVSVIISAYRDDVQQRPLLKHGLVCITKNRHINYEQFTSNQWNSTCTGADRKIPFSVIPTDNGTKIYGLEWNDDFVTAYISGRSYHLNINTNWFNNVTLLYSRSSTATWEYSAAYAYQGVSNFTYYKLNNTNGLKTYELCEDYEHCTGYATNVFAPTSGGYIPDGFSFNNWFLLTNSSTFVSGRFVTNQPLLINCLWPVPSFGVAAQEFCFEGAQFSQCNGVSLNNTVDVIRFNLNFTADVQSGMGATVFSLNTTGGVILEISCYSDTVSESSSYSYGEIPFGITDGPRYCYVLYNGTALKYLGTLPPSVKEIAISKWGHFYINGYNFFSTFPIGCISFNLTTGVSGAFWTIAYTSYTEALVQVENTAIKNVTYCNSHINNIKCSQLTANLNNGFYPVASSEVGFVNKSVVLLPSFFTYTAVNITIDLGMKLSGYGQPIASTLSNITLPMQDNNTDVYCIRSNQFSVYVHSTCKSSLWDNIFNQDCTDVLEATAVIKTGTCPFSFDKLNNYLTFNKFCLSLSPVGANCKFDVAARTRTNEQVVRSLYVIYEEGDNIVGVPSDNSGLHDLSVLHLDSCTDYNIYGRTGVGIIRRTNSTLLSGLYYTSLSGDLLGFKNVSDGVIYSVTPCDVSAQAAVIDGAIVGAMTSINSELLGLTHWTTTPNFYYYSIYNYTSERTRGTAIDSNDVDCEPVITYSNIGVCKNGALVFINVTHSDGDVQPISTGNVTIPTNFTISVQVEYMQVYTTPVSIDCARYVCNGNPRCNKLLTQYVSACQTIEQALAMGARLENMEVDSMLFVSENALKLASVEAFNSTENLDPIYKEWPSIGGSWLGGLKDILPSHNSKRKYGSAIEDLLFDKVVTSGLGTVDEDYKRCTGGYDIADLVCAQYYNGIMVLPGVANADKMTMYTASLAGGITLGALGGGAVAIPFAVAVQARLNYVALQTDVLNKNQQILANAFNQAIGNITQAFGKVNDAIHQTSQGLATVAKALAKVQDVVNTQGQALSHLTVQLQNNFQAISSSISDIYNRLDELSADAQVDRLITGRLTALNAFVSQTLTRQAEVRASRQLAKDKVNECVRSQSQRFGFCGNGTHLFSLANAAPNGMIFFHTVLLPTAYETVTAWSGICASDGDRTFGLVVKDVQLTLFRNLDDKFYLTPRTMYQPRVATSSDFVQIEGCDVLFVNATVIDLPSIIPDYIDINQTVQDILENYRPNWTVPEFTLDIFNATYLNLTGEIDDLEFRSEKLHNTTVELAILIDNINNTLVNLEWLNRIETYVKWPWYVWLLIGLVVVFCIPLLLFCCFSTGCCGCIGCLGSCCHSICSRRQFENYEPIEKVHVH.

Residues methionine 1–glutamine 32 form the signal peptide. Residues leucine 33–tyrosine 779 are S1. Residues leucine 33–proline 1393 are Virion surface-facing. Residues valine 660–valine 804 are interaction with host ANPEP. The interval serine 780–histidine 1452 is S2. Positions alanine 1025–valine 1046 are fusion peptide. The tract at residues isoleucine 1040–leucine 1159 is heptad repeat 1 (HR1). 2 coiled-coil regions span residues glutamine 1107–valine 1151 and threonine 1341–leucine 1383. Residues proline 1308–valine 1405 form a heptad repeat 2 (HR2) region. Residues tryptophan 1394–phenylalanine 1413 form a helical membrane-spanning segment. Over cysteine 1414–histidine 1452 the chain is Intravirion. Residues lysine 1448 to histidine 1452 carry the KxHxx motif.

The protein belongs to the alphacoronaviruses spike protein family. Homotrimer. During virus morphogenesis, found in a complex with M and HE proteins. Interacts with host ANPEP.

The protein localises to the virion membrane. Its subcellular location is the host endoplasmic reticulum-Golgi intermediate compartment membrane. Its function is as follows. S1 region attaches the virion to the cell membrane by interacting with host ANPEP/aminopeptidase N, initiating the infection. Binding to the receptor probably induces conformational changes in the S glycoprotein unmasking the fusion peptide of S2 region and activating membranes fusion. S2 region belongs to the class I viral fusion protein. Under the current model, the protein has at least 3 conformational states: pre-fusion native state, pre-hairpin intermediate state, and post-fusion hairpin state. During viral and target cell membrane fusion, the coiled coil regions (heptad repeats) regions assume a trimer-of-hairpins structure, positioning the fusion peptide in close proximity to the C-terminal region of the ectodomain. The formation of this structure appears to drive apposition and subsequent fusion of viral and target cell membranes. The sequence is that of Spike glycoprotein from Felidae (cat family).